The chain runs to 419 residues: Zinc finger CCCH domain-containing protein 62 (419 aa).

Residues 89-116 (SLRKWVCKYWKDGKCKRGEQCQFLHSWS) form a C3H1-type zinc finger. WD repeat units lie at residues 129–168 (GHNKELKGIALPEGSDKLFSVSIDGTLRVWDCNSGQCVHS), 210–247 (GVVGQVNAMTIANGMLFAGTSSGSILVWKATTDSESDP), 256–293 (GHSGEVTCFAVGGQMLYSGSVDKTIKMWDLNTLQCIMT), 296–335 (QHTGTVTSLLCWDKCLISSSLDGTIKVWAYSENGILKVVQ), and 383–419 (FSTHTIATLTIGPQGLLFSGDESGNLRVWTLAAGNKV).

In Arabidopsis thaliana (Mouse-ear cress), this protein is Zinc finger CCCH domain-containing protein 62 (ZFWD4).